Here is a 162-residue protein sequence, read N- to C-terminus: 18.5 kDa class IV heat shock protein (162 aa).

The region spanning 53-149 (TSSSTVNTQL…PPQLPEIEEN (97 aa)) is the sHSP domain.

Belongs to the small heat shock protein (HSP20) family. In terms of assembly, may form oligomeric structures.

The protein localises to the cytoplasm. The chain is 18.5 kDa class IV heat shock protein (HSP18.5) from Arabidopsis thaliana (Mouse-ear cress).